Consider the following 208-residue polypeptide: MARLNVKPTRMELSNLKNRLKTATRGHKLLKDKRDELMRRFVDLIRENNELRQTLEKELAANMKEFVLAKASENSLMVEELFAVPVHEVTLWIDIENIMSVNVPKFHVQSNTAREQEQGEFAYSYLSSNSEMDNTIQKTKELLEKLLRLAEVEKTCQLMADDIEKTRRRVNGLEYSIIPQLEETIHYIELKLEEAERASLVRIMKITS.

Belongs to the V-ATPase D subunit family.

Functionally, produces ATP from ADP in the presence of a proton gradient across the membrane. This chain is V-type ATP synthase subunit D, found in Streptococcus pyogenes serotype M6 (strain ATCC BAA-946 / MGAS10394).